Here is a 1225-residue protein sequence, read N- to C-terminus: RNA-directed RNA polymerase VP2 (1225 aa).

The RdRp catalytic domain occupies 497–727; sequence LFLSFMPYTI…NSIVLLQQLV (231 aa).

It belongs to the reoviridae RNA-directed RNA polymerase family. Interacts with VP6.

It carries out the reaction RNA(n) + a ribonucleoside 5'-triphosphate = RNA(n+1) + diphosphate. In terms of biological role, RNA-directed RNA polymerase that is involved in transcription and genome replication. Following infection, it catalyzes the synthesis of fully conservative plus strands. After core assembly, which consists in recruitment of one capped plus-strand for each genomic segments and polymerase complexes, the polymerase switches mode and catalyzes the synthesis of complementary minus-strands. The sequence is that of RNA-directed RNA polymerase VP2 (S2) from Lymantria dispar (Gypsy moth).